A 248-amino-acid chain; its full sequence is 4-hydroxy-tetrahydrodipicolinate reductase (248 aa).

D28 contributes to the NAD(+) binding site. K29 contributes to the NADP(+) binding site. NAD(+) contacts are provided by residues 78-80 (ATT) and 102-105 (SYNM). The Proton donor/acceptor role is filled by H134. Residue H135 coordinates (S)-2,3,4,5-tetrahydrodipicolinate. K138 (proton donor) is an active-site residue. 144 to 145 (GT) is a (S)-2,3,4,5-tetrahydrodipicolinate binding site.

The protein belongs to the DapB family.

The protein localises to the cytoplasm. The catalysed reaction is (S)-2,3,4,5-tetrahydrodipicolinate + NAD(+) + H2O = (2S,4S)-4-hydroxy-2,3,4,5-tetrahydrodipicolinate + NADH + H(+). The enzyme catalyses (S)-2,3,4,5-tetrahydrodipicolinate + NADP(+) + H2O = (2S,4S)-4-hydroxy-2,3,4,5-tetrahydrodipicolinate + NADPH + H(+). It functions in the pathway amino-acid biosynthesis; L-lysine biosynthesis via DAP pathway; (S)-tetrahydrodipicolinate from L-aspartate: step 4/4. Catalyzes the conversion of 4-hydroxy-tetrahydrodipicolinate (HTPA) to tetrahydrodipicolinate. The chain is 4-hydroxy-tetrahydrodipicolinate reductase from Exiguobacterium sibiricum (strain DSM 17290 / CCUG 55495 / CIP 109462 / JCM 13490 / 255-15).